A 545-amino-acid polypeptide reads, in one-letter code: Hydroxylamine reductase (545 aa).

C7, C10, C19, and C25 together coordinate [4Fe-4S] cluster. Hybrid [4Fe-2O-2S] cluster is bound by residues H241, E265, C309, C400, C428, C453, E488, and K490. The residue at position 400 (C400) is a Cysteine persulfide; in oxidized form.

It belongs to the HCP family. Monomer. [4Fe-4S] cluster serves as cofactor. It depends on hybrid [4Fe-2O-2S] cluster as a cofactor.

It localises to the cytoplasm. The enzyme catalyses A + NH4(+) + H2O = hydroxylamine + AH2 + H(+). Its function is as follows. Catalyzes the reduction of hydroxylamine to form NH(3) and H(2)O. The protein is Hydroxylamine reductase of Desulfovibrio desulfuricans (strain ATCC 27774 / DSM 6949 / MB).